The chain runs to 94 residues: Small ribosomal subunit protein bS6 (94 aa).

The protein belongs to the bacterial ribosomal protein bS6 family.

Binds together with bS18 to 16S ribosomal RNA. The chain is Small ribosomal subunit protein bS6 from Phytoplasma mali (strain AT).